A 91-amino-acid chain; its full sequence is Small ribosomal subunit protein uS19 (91 aa).

The protein belongs to the universal ribosomal protein uS19 family.

Protein S19 forms a complex with S13 that binds strongly to the 16S ribosomal RNA. This is Small ribosomal subunit protein uS19 from Hahella chejuensis (strain KCTC 2396).